The chain runs to 357 residues: 3'(2'),5'-bisphosphate nucleotidase (357 aa).

Asp-49 serves as the catalytic Proton acceptor. Residues Glu-72, Asp-142, Ile-144, and Asp-145 each contribute to the Mg(2+) site. Thr-147 acts as the Proton acceptor in catalysis. Positions 147, 241, 264, 267, 281, and 294 each coordinate adenosine 3',5'-bisphosphate. 5 residues coordinate AMP: His-241, Ser-264, Lys-267, Arg-281, and Asp-294. Position 294 (Asp-294) interacts with Mg(2+).

Belongs to the inositol monophosphatase superfamily. The cofactor is Mg(2+).

It localises to the cytoplasm. The protein resides in the nucleus. It catalyses the reaction 3'-phosphoadenylyl sulfate + H2O = adenosine 5'-phosphosulfate + phosphate. It carries out the reaction adenosine 3',5'-bisphosphate + H2O = AMP + phosphate. The catalysed reaction is adenosine 2',5'-bisphosphate + H2O = AMP + phosphate. Phosphatase activity is very sensitive to lithium and moderately sensitive to sodium. The inhibitory effects of lithium and sodium are overcome by high concentrations of potassium. Lithium exerts its inhibitory action by blocking the products of the PAP hydrolysis at the active site. In terms of biological role, phosphatase that converts adenosine 3'-phosphate 5'-phosphosulfate (PAPS) to adenosine 5'-phosphosulfate (APS) and 3'(2')-phosphoadenosine 5'-phosphate (PAP) to AMP. May regulate the flux of sulfur in the sulfur-activation pathway by converting PAPS to APS. Involved in salt tolerance. Confers resistance to lithium. Shows no activity on inositol mono- and diphosphates, 3'-AMP, AMP, nicotinamide adenine dinucleotide phosphate (NADP), and p-nitrophenylphosphate. In Saccharomyces cerevisiae (strain ATCC 204508 / S288c) (Baker's yeast), this protein is 3'(2'),5'-bisphosphate nucleotidase (MET22).